The chain runs to 194 residues: ATP-dependent Clp protease proteolytic subunit 3 (194 aa).

S96 functions as the Nucleophile in the catalytic mechanism. H121 is an active-site residue.

The protein belongs to the peptidase S14 family. As to quaternary structure, fourteen ClpP subunits assemble into 2 heptameric rings which stack back to back to give a disk-like structure with a central cavity, resembling the structure of eukaryotic proteasomes.

The protein localises to the cytoplasm. It carries out the reaction Hydrolysis of proteins to small peptides in the presence of ATP and magnesium. alpha-casein is the usual test substrate. In the absence of ATP, only oligopeptides shorter than five residues are hydrolyzed (such as succinyl-Leu-Tyr-|-NHMec, and Leu-Tyr-Leu-|-Tyr-Trp, in which cleavage of the -Tyr-|-Leu- and -Tyr-|-Trp bonds also occurs).. Cleaves peptides in various proteins in a process that requires ATP hydrolysis. Has a chymotrypsin-like activity. Plays a major role in the degradation of misfolded proteins. This is ATP-dependent Clp protease proteolytic subunit 3 from Rhizobium etli (strain ATCC 51251 / DSM 11541 / JCM 21823 / NBRC 15573 / CFN 42).